Consider the following 683-residue polypeptide: Protein hook (683 aa).

The region spanning 5 to 123 is the Calponin-homology (CH) domain; that stretch reads NGMYYSLLEW…RLLQLVLGCA (119 aa). Coiled-coil stretches lie at residues 135–440 and 484–594; these read EIMC…LKCG and QTAL…AKEV.

This sequence belongs to the hook family. As to quaternary structure, homodimer. Interacts with microtubules via its N-terminus.

The protein resides in the cytoplasm. Its subcellular location is the cytoskeleton. It localises to the endosome. It is found in the synapse. Functionally, involved in endocytic trafficking by stabilizing organelles of the endocytic pathway. Probably acts as a cytoskeletal linker protein required to tether endosome vesicles to the cytoskeleton. Involved in modulation of endocytosis at stages required for down-regulation of membrane proteins that control synapse size. Not involved in synaptic vesicle recycling. Required in R7 cells for boss endocytosis into multivesicular bodies (MVBs). Has a role in regulating adult longevity. This chain is Protein hook, found in Drosophila grimshawi (Hawaiian fruit fly).